The sequence spans 105 residues: Vacuolar ATPase assembly integral membrane protein VMA21 homolog (105 aa).

The segment at 1–26 (MSTKNKKAAGGNGGAPKQTRQQSHDS) is disordered. At 1–36 (MSTKNKKAAGGNGGAPKQTRQQSHDSQDYSSFKTVL) the chain is on the cytoplasmic side. Residues 37 to 57 (FYCMLIVFLPVLTFFVLKGFV) traverse the membrane as a helical segment. Over 58-68 (LDQFLDISEVK) the chain is Lumenal. A helical membrane pass occupies residues 69–89 (VNIASAVGAVVALHIALGLYI). At 90–105 (YRAYFGTTGSKASKTD) the chain is on the cytoplasmic side.

This sequence belongs to the VMA21 family.

The protein localises to the endoplasmic reticulum membrane. The protein resides in the endoplasmic reticulum-Golgi intermediate compartment membrane. It localises to the cytoplasmic vesicle. It is found in the COPII-coated vesicle membrane. Required for the assembly of the V0 complex of the vacuolar ATPase (V-ATPase) in the endoplasmic reticulum. In Drosophila erecta (Fruit fly), this protein is Vacuolar ATPase assembly integral membrane protein VMA21 homolog.